The primary structure comprises 226 residues: Adenylate kinase (226 aa).

11–16 provides a ligand contact to ATP; sequence GSGKGT. The NMP stretch occupies residues 31 to 64; that stretch reads SAGEILKHALSVTKFHFNFNTDNMLNQINSGNLV. AMP-binding positions include 62 to 64, 90 to 93, and glutamine 97; these read NLV and GFPR. The segment at 127–164 is LID; the sequence is GRQVHIKSGRTYHIKFNPPKLDGIDDITGEKLVIRADD. Residues arginine 128 and 137 to 138 contribute to the ATP site; that span reads TY. The AMP site is built by arginine 161 and arginine 172. Glutamine 205 is an ATP binding site.

This sequence belongs to the adenylate kinase family. As to quaternary structure, monomer.

It localises to the cytoplasm. It carries out the reaction AMP + ATP = 2 ADP. It participates in purine metabolism; AMP biosynthesis via salvage pathway; AMP from ADP: step 1/1. Functionally, catalyzes the reversible transfer of the terminal phosphate group between ATP and AMP. Plays an important role in cellular energy homeostasis and in adenine nucleotide metabolism. The polypeptide is Adenylate kinase (Blochmanniella floridana).